Consider the following 332-residue polypeptide: Ribosomal RNA small subunit methyltransferase H (332 aa).

Residues 36-38 (GGY), aspartate 54, phenylalanine 81, aspartate 102, and glutamine 109 contribute to the S-adenosyl-L-methionine site. The interval 295–322 (PRARSAKLRGAERTESPAHAAGDLPGWP) is disordered.

Belongs to the methyltransferase superfamily. RsmH family.

The protein resides in the cytoplasm. It carries out the reaction cytidine(1402) in 16S rRNA + S-adenosyl-L-methionine = N(4)-methylcytidine(1402) in 16S rRNA + S-adenosyl-L-homocysteine + H(+). Specifically methylates the N4 position of cytidine in position 1402 (C1402) of 16S rRNA. This is Ribosomal RNA small subunit methyltransferase H from Rhodopseudomonas palustris (strain ATCC BAA-98 / CGA009).